We begin with the raw amino-acid sequence, 192 residues long: dITP/XTP pyrophosphatase (192 aa).

7–12 lines the substrate pocket; sequence SNNKNK. The active-site Proton acceptor is aspartate 68. Aspartate 68 provides a ligand contact to Mg(2+). Substrate is bound by residues threonine 69, 148-151, lysine 171, and 176-177; these read FGYD and HR.

Belongs to the HAM1 NTPase family. As to quaternary structure, homodimer. It depends on Mg(2+) as a cofactor.

The enzyme catalyses XTP + H2O = XMP + diphosphate + H(+). The catalysed reaction is dITP + H2O = dIMP + diphosphate + H(+). It carries out the reaction ITP + H2O = IMP + diphosphate + H(+). In terms of biological role, pyrophosphatase that catalyzes the hydrolysis of nucleoside triphosphates to their monophosphate derivatives, with a high preference for the non-canonical purine nucleotides XTP (xanthosine triphosphate), dITP (deoxyinosine triphosphate) and ITP. Seems to function as a house-cleaning enzyme that removes non-canonical purine nucleotides from the nucleotide pool, thus preventing their incorporation into DNA/RNA and avoiding chromosomal lesions. In Flavobacterium johnsoniae (strain ATCC 17061 / DSM 2064 / JCM 8514 / BCRC 14874 / CCUG 350202 / NBRC 14942 / NCIMB 11054 / UW101) (Cytophaga johnsonae), this protein is dITP/XTP pyrophosphatase.